The following is a 233-amino-acid chain: Maternal B9.15 protein (233 aa).

A disordered region spans residues 135-165; that stretch reads KATSDYHSGTSSDEEPTNKEPKTIPKVSNPN.

The protein belongs to the BTG family.

The protein is Maternal B9.15 protein of Xenopus laevis (African clawed frog).